The primary structure comprises 209 residues: Germin-like protein (209 aa).

The N-terminal stretch at 1–18 (MIVPIFFLFSLLFSSSHG) is a signal peptide. A disulfide bond links Cys24 and Cys39. The 147-residue stretch at 53–199 (SGLGITGNTT…ASFLDPAEIK (147 aa)) folds into the Cupin type-1 domain. Asn60 is a glycosylation site (N-linked (GlcNAc...) asparagine). Residues His101, His103, Glu108, and His147 each coordinate Mn(2+).

It localises to the secreted. The protein localises to the extracellular space. Its subcellular location is the apoplast. In terms of biological role, has antibacterial activity against B.subtilis (MIC=5 ug), B.cereus (MIC=50 ug), A.hydrophila (MIC=2.5 ug), S.marcescens(MIC=10 ug), S.enterica (MIC=10 ug), P.entomophila (MIC=2.5 ug) and P.rhodesiae (MIC=10 ug). Has antifungal activity against F.solani KACC 40384 and F.oxysporum KACC 40032. Probably has no oxalate oxidase activity even if the active site is conserved. The chain is Germin-like protein from Morus alba (White mulberry).